A 221-amino-acid chain; its full sequence is Thyrotroph embryonic factor (221 aa).

Residues 72 to 116 (ESASSSTASPPSSSTAVFQPSETVSSTESSLEKERETPSPIDPNC) form a disordered region. A compositionally biased stretch (low complexity) spans 73-100 (SASSSTASPPSSSTAVFQPSETVSSTES). Residues 173–221 (DEKYWTRRKKNNVAAKRSRDARRLKENQITIRAAFLEKENTALRTEVAD) form the bZIP domain. Residues 175 to 195 (KYWTRRKKNNVAAKRSRDARR) form a basic motif region. The tract at residues 196-203 (LKENQITI) is leucine-zipper.

It belongs to the bZIP family. PAR subfamily. As to quaternary structure, binds DNA as a homodimer or a heterodimer. Can form a heterodimer with DBP.

It localises to the nucleus. Its function is as follows. Transcription factor that binds to and transactivates the TSHB promoter. Binds to a minimal DNA-binding sequence 5'-[TC][AG][AG]TTA[TC][AG]-3'. The chain is Thyrotroph embryonic factor (TEF) from Phodopus sungorus (Striped hairy-footed hamster).